We begin with the raw amino-acid sequence, 508 residues long: tRNA(Ile2) 2-agmatinylcytidine synthetase TiaS (508 aa).

The segment at residues 367–427 is a DNA-binding region (OB); that stretch reads ITGGHVLIEL…YQLNIEKINV (61 aa).

It belongs to the TiaS family.

The protein localises to the cytoplasm. It catalyses the reaction cytidine(34) in tRNA(Ile2) + agmatine + ATP + H2O = 2-agmatinylcytidine(34) in tRNA(Ile2) + AMP + 2 phosphate + 2 H(+). Its function is as follows. ATP-dependent agmatine transferase that catalyzes the formation of 2-agmatinylcytidine (agm2C) at the wobble position (C34) of tRNA(Ile2), converting the codon specificity from AUG to AUA. In Methanococcus voltae (strain ATCC BAA-1334 / A3), this protein is tRNA(Ile2) 2-agmatinylcytidine synthetase TiaS.